We begin with the raw amino-acid sequence, 371 residues long: Transcription factor MYB12 (371 aa).

HTH myb-type domains are found at residues 9-61 (KVGI…INYL) and 62-116 (RSDL…SRKL). 2 consecutive DNA-binding regions (H-T-H motif) follow at residues 37–61 (WRSL…INYL) and 89–112 (WSLI…NSHL). The interval 136-183 (NASSAPPPPQAKRRLGRTSRSAMKPKIHRTKTRKTKKTSAPPEPNADV) is disordered. The span at 146–172 (AKRRLGRTSRSAMKPKIHRTKTRKTKK) shows a compositional bias: basic residues.

As to expression, expressed in stems and flower buds. Expressed in seedlings, roots, cotyledons and apical meristems.

It is found in the nucleus. In terms of biological role, flavonol-specific transcription activator involved in the regulation of several genes of flavonoid biosynthesis. Activates the expression of CHS, CHI, F3H and FLS1. Controls flavonol biosynthesis mainly in the root. Confers tolerance to UV-B. The polypeptide is Transcription factor MYB12 (Arabidopsis thaliana (Mouse-ear cress)).